A 309-amino-acid polypeptide reads, in one-letter code: Probable ABC transporter permease protein YqgH (309 aa).

6 helical membrane-spanning segments follow: residues 30–50 (MIVT…TIFL), 88–108 (FIFG…PLGI), 133–153 (LVGI…VPFI), 165–185 (LLAG…SISA), 214–234 (LVPA…ARAF), and 280–300 (NTLW…ILLI). Residues 89–300 (IFGSFAVTIL…VMSFLFILLI (212 aa)) enclose the ABC transmembrane type-1 domain.

This sequence belongs to the binding-protein-dependent transport system permease family. CysTW subfamily.

Its subcellular location is the cell membrane. Its function is as follows. Part of the binding-protein-dependent transport system YqgGHIJK. Probably responsible for the translocation of the substrate across the membrane. The polypeptide is Probable ABC transporter permease protein YqgH (yqgH) (Bacillus subtilis (strain 168)).